We begin with the raw amino-acid sequence, 595 residues long: MRAARAAPLLQLLLLLGPWLEAAGVAESPLPAVVLAILARNAEHSLPHYLGALERLDYPRARMALWCATDHNVDNTTEMLQEWLAAVGDDYAAVVWRPEGEPRFYPDEEGPKHWTKERHQFLMELKQEALTFARNWGADYILFADTDNILTNNQTLRLLMGQGLPVVAPMLDSQTYYSNFWCGITPQGYYRRTAEYFPTKNRQRRGCFRVPMVHSTFLASLRAEGADQLAFYPPHPNYTWPFDDIIVFAYACQAAGVSVHVCNEHRYGYMNVPVKSHQGLEDERVNFIHLILEALVDGPRMQASAHVTRPSKRPSKIGFDEVFVISLARRPDRRERMLASLWEMEISGRVVDAVDGWMLNSSAIRNLGVDLLPGYQDPYSGRTLTKGEVGCFLSHYSIWEEVVARGLARVLVFEDDVRFESNFRGRLERLMEDVEAEKLSWDLIYLGRKQVNPEKETAVEGLPGLVVAGYSYWTLAYALRLAGARKLLASQPLRRMLPVDEFLPIMFDQHPNEQYKAHFWPRDLVAFSAQPLLAAPTHYAGDAEWLSDTETSSPWDDDSGRLISWSGSQKTLRSPRLDLTGSSGHSLQPQPRDEL.

An N-terminal signal peptide occupies residues 1-22 (MRAARAAPLLQLLLLLGPWLEA). N-linked (GlcNAc...) asparagine glycans are attached at residues Asn75, Asn153, Asn237, and Asn360. Positions 548–595 (DTETSSPWDDDSGRLISWSGSQKTLRSPRLDLTGSSGHSLQPQPRDEL) are disordered. Residues 580–589 (TGSSGHSLQP) are compositionally biased toward polar residues. A Prevents secretion from ER motif is present at residues 592–595 (RDEL).

The protein belongs to the glycosyltransferase 25 family. In terms of tissue distribution, ubiquitous. Highly expressed in secretory and nervous tissues.

The protein resides in the endoplasmic reticulum lumen. Functionally, probable cell adhesion protein involved in leukocyte transmigration across the blood-brain barrier. Does not express any beta-galactosyltransferase activity in vitro. The protein is Inactive glycosyltransferase 25 family member 3 (CERCAM) of Homo sapiens (Human).